The sequence spans 415 residues: Phosphoglycerate kinase (415 aa).

Substrate is bound by residues 27–29 (DIN), Arg-44, 67–70 (HQGR), Arg-124, and Arg-164. ATP contacts are provided by residues Glu-336 and 362–365 (GGHM).

The protein belongs to the phosphoglycerate kinase family. In terms of assembly, monomer.

The protein localises to the cytoplasm. It carries out the reaction (2R)-3-phosphoglycerate + ATP = (2R)-3-phospho-glyceroyl phosphate + ADP. Its pathway is carbohydrate degradation; glycolysis; pyruvate from D-glyceraldehyde 3-phosphate: step 2/5. In Sulfurisphaera tokodaii (strain DSM 16993 / JCM 10545 / NBRC 100140 / 7) (Sulfolobus tokodaii), this protein is Phosphoglycerate kinase.